Here is a 249-residue protein sequence, read N- to C-terminus: MAVQGPWVGSSYVAETGQNWASLAANELRVTERPFWISSFIGRSKEEIWEWTGENHSFNKDWLIGELRNRGGTPVVINIRAHQVSYTPGAPLFEFPGDLPNAYITLNIYADIYGRGGTGGVAYLGGNPGGDCIHNWIGNRLRINNQGWICGGGGGGGGFRVGHTEAGGGGGRPLGAGGVSSLNLNGDNATLGAPGRGYQLGNDYAGNGGDVGNPGSASSAEMGGGAAGRAVVGTSPQWINVGNIAGSWL.

10 consecutive short sequence motifs (GRM) follow at residues 114-121, 124-131, 151-161, 164-172, 175-181, 184-190, 192-199, 204-210, 213-218, and 222-229; these read GRGGTGGV, LGGNPGGD, GGGGGGGGFRV, TEAGGGGGR, GAGGVSS, LNGDNAT, GAPGRGYQ, YAGNGGD, NPGSAS, and MGGGAAGR.

It belongs to the S16-like receptor-recognizing protein gp38 family. As to quaternary structure, interacts with host OmpC receptor; this interaction allows the reversible adsorption of the phage on the host membrane.

It localises to the virion. Receptor binding protein (RBP) that is at the tip of the long tail fibers and serves as the phage recognition site for the attachment host receptor OmpC. The sequence is that of Receptor-recognizing protein gp38 from Salmonella enterica (Salmonella choleraesuis).